The chain runs to 218 residues: Ras-related protein RabT2 (218 aa).

32–39 (GDYKTGKG) contacts GTP. The Effector region signature appears at 54 to 61 (VSSIGVDF). GTP-binding positions include 80 to 84 (DANSC) and 140 to 143 (NKCD). C215 bears the Cysteine methyl ester mark. C215 carries S-geranylgeranyl cysteine lipidation. Positions 216 to 218 (NIL) are cleaved as a propeptide — removed in mature form.

It belongs to the small GTPase superfamily. Rab family.

The protein resides in the cell membrane. In Dictyostelium discoideum (Social amoeba), this protein is Ras-related protein RabT2 (rabT2).